Reading from the N-terminus, the 184-residue chain is Serine recombinase PinE (184 aa).

A Resolvase/invertase-type recombinase catalytic domain is found at 1 to 134 (MLIGYVRVST…AGLETARAQG (134 aa)). Ser-9 (O-(5'-phospho-DNA)-serine intermediate) is an active-site residue. The H-T-H motif DNA-binding region spans 161–180 (RQKVAIIYDVGVSTLYKRFP).

The protein belongs to the site-specific recombinase resolvase family.

Its function is as follows. This protein catalyzes the inversion of an 1800-bp E.coli DNA fragment, the P region, which can exist in either orientation. The function of the inversion is not yet clear. The sequence is that of Serine recombinase PinE (pinE) from Escherichia coli (strain K12).